The sequence spans 521 residues: MAAVEEAQFWQAIGILIKNYHALNKKIFEVVITQVTKQQNGRVCESSAEELAMSLKEDPSQRTCTGFTIGFKLLSKKLAENILGTGIVDFENCLYECQFASDSIEGFSVGLLGGEFKLKSKSNTNWLEFVLRPKLLSWSQSKQDEAKVKSLGLVNVEKYNDLYKELKQRHSQRLLEHWKTAQESTDPLKFIYEDLAIAAYLIVLWSQTQSEPTAFADLGCGNGLLVHVLNAEGYKGYGYDIRKRKLWSLYPPDTQRSLIEKAVEPNSFRLDFPGVDWLIGNHSDELSPWLPVLAGRLNINYFLLPCCPFELSGAKFRRRNTKISAYQDFFQYVTQVSHECGYEILQDRLKIPSTKRLALLGIKRKASKAIEDLEYFVQEELRKYKTGDAKIKLREKEESVRNCTQVDKTIIDGLVFKIFKLILDSNEDKWSGRLPMREIAQALTKEELSGIKSECGGIKTLLRNKHEVFEFCGGDLIGIRTPKPTATLPKSHLTIKKRSCFFKLHHPLGCPLDDAECSFIH.

The protein belongs to the TRM44 family.

It localises to the cytoplasm. The catalysed reaction is uridine(44) in tRNA(Ser) + S-adenosyl-L-methionine = 2'-O-methyluridine(44) in tRNA(Ser) + S-adenosyl-L-homocysteine + H(+). Probable adenosyl-L-methionine (AdoMet)-dependent tRNA (uracil-O(2)-)-methyltransferase. This Drosophila melanogaster (Fruit fly) protein is Probable tRNA (uracil-O(2)-)-methyltransferase (trmt44).